A 674-amino-acid polypeptide reads, in one-letter code: Translation factor GUF1, mitochondrial (674 aa).

The transit peptide at 1-48 (MRGCLQPARWLTTATLRRPLLSCPRQLPTRYNPFPRPFHHAPVLQARQ) directs the protein to the mitochondrion. The tr-type G domain maps to 66–246 (ERYRNFCIVA…AIIESIPALL (181 aa)). Residues 75 to 82 (AHVDHGKS), 139 to 143 (DTPGH), and 193 to 196 (NKVD) contribute to the GTP site.

The protein belongs to the TRAFAC class translation factor GTPase superfamily. Classic translation factor GTPase family. LepA subfamily.

Its subcellular location is the mitochondrion inner membrane. It catalyses the reaction GTP + H2O = GDP + phosphate + H(+). Its function is as follows. Promotes mitochondrial protein synthesis. May act as a fidelity factor of the translation reaction, by catalyzing a one-codon backward translocation of tRNAs on improperly translocated ribosomes. Binds to mitochondrial ribosomes in a GTP-dependent manner. This chain is Translation factor GUF1, mitochondrial, found in Arthroderma otae (strain ATCC MYA-4605 / CBS 113480) (Microsporum canis).